Consider the following 149-residue polypeptide: Transcriptional repressor NrdR (149 aa).

The segment at 3-34 is a zinc-finger region; that stretch reads CPFCSATDTKVIDSRLVSDGHQVRRRRQCLAC. An ATP-cone domain is found at 49–139; the sequence is PKVIKSNGNR…VYRSFEDIKE (91 aa).

The protein belongs to the NrdR family. Zn(2+) is required as a cofactor.

Functionally, negatively regulates transcription of bacterial ribonucleotide reductase nrd genes and operons by binding to NrdR-boxes. The polypeptide is Transcriptional repressor NrdR (Aliivibrio salmonicida (strain LFI1238) (Vibrio salmonicida (strain LFI1238))).